Consider the following 295-residue polypeptide: uncharacterized protein (295 aa).

This is an uncharacterized protein from Xanthobacter autotrophicus.